Consider the following 356-residue polypeptide: Histidinol-phosphate aminotransferase 1 (356 aa).

Lys-210 is subject to N6-(pyridoxal phosphate)lysine.

This sequence belongs to the class-II pyridoxal-phosphate-dependent aminotransferase family. Histidinol-phosphate aminotransferase subfamily. In terms of assembly, homodimer. Requires pyridoxal 5'-phosphate as cofactor.

It carries out the reaction L-histidinol phosphate + 2-oxoglutarate = 3-(imidazol-4-yl)-2-oxopropyl phosphate + L-glutamate. It functions in the pathway amino-acid biosynthesis; L-histidine biosynthesis; L-histidine from 5-phospho-alpha-D-ribose 1-diphosphate: step 7/9. This Hydrogenovibrio crunogenus (strain DSM 25203 / XCL-2) (Thiomicrospira crunogena) protein is Histidinol-phosphate aminotransferase 1.